Here is a 360-residue protein sequence, read N- to C-terminus: Cannabinoid receptor 2 (360 aa).

Residues 1 to 33 (MEECWVTEIANGSKDGLDSNPMKDYMILSGPQK) are Extracellular-facing. Residue N11 is glycosylated (N-linked (GlcNAc...) asparagine). A helical membrane pass occupies residues 34–59 (TAVAVLCTLLGLLSALENVAVLYLIL). Residues 60 to 71 (SSHQLRRKPSYL) lie on the Cytoplasmic side of the membrane. Residues 72–92 (FIGSLAGADFLASVVFACSFV) traverse the membrane as a helical segment. The Extracellular segment spans residues 93 to 104 (NFHVFHGVDSKA). Residues 105-129 (VFLLKIGSVTMTFTASVGSLLLTAI) traverse the membrane as a helical segment. Residues 130-149 (DRYLCLRYPPSYKALLTRGR) lie on the Cytoplasmic side of the membrane. The helical transmembrane segment at 150–172 (ALVTLGIMWVLSALVSYLPLMGW) threads the bilayer. Topologically, residues 173–188 (TCCPRPCSELFPLIPN) are extracellular. Residues 189 to 214 (DYLLSWLLFIAFLFSGIIYTYGHVLW) form a helical membrane-spanning segment. Residues 215–246 (KAHQHVASLSGHQDRQVPGMARMRLDVRLAKT) lie on the Cytoplasmic side of the membrane. The chain crosses the membrane as a helical span at residues 247-267 (LGLVLAVLLICWFPVLALMAH). Over 268-279 (SLATTLSDQVKK) the chain is Extracellular. Residues 280 to 301 (AFAFCSMLCLINSMVNPVIYAL) traverse the membrane as a helical segment. The Cytoplasmic portion of the chain corresponds to 302-360 (RSGEIRSSAHHCLAHWKKCVRGLGSEAKEEAPRSSVTETEADGKITPWPDSRDLDLSDC). The disordered stretch occupies residues 327–360 (EAKEEAPRSSVTETEADGKITPWPDSRDLDLSDC). Phosphoserine is present on residues S335 and S336. T338 carries the phosphothreonine modification. The segment covering 351-360 (DSRDLDLSDC) has biased composition (basic and acidic residues). S352 carries the phosphoserine modification.

The protein belongs to the G-protein coupled receptor 1 family. Constitutively phosphorylated on Ser-352; phosphorylation increases cell internalization and desensitizes the receptor. In terms of tissue distribution, preferentially expressed in cells of the immune system with higher expression in B-cells and NK cells (at protein level). Expressed in skin in suprabasal layers and hair follicles (at protein level). Highly expressed in tonsil and to a lower extent in spleen, peripheral blood mononuclear cells, and thymus. PubMed:14657172 could not detect expression in normal brain. Expressed in brain by perivascular microglial cells and dorsal root ganglion sensory neurons (at protein level). Two isoforms are produced by alternative promoter usage and differ only in the 5' UTR: isoform CB2A is observed predominantly in testis with some expression in brain, while isoform CB2B is predominant in spleen and leukocytes.

It localises to the cell membrane. The protein resides in the cell projection. The protein localises to the dendrite. It is found in the perikaryon. Functionally, heterotrimeric G protein-coupled receptor for endocannabinoid 2-arachidonoylglycerol mediating inhibition of adenylate cyclase. May function in inflammatory response, nociceptive transmission and bone homeostasis. The sequence is that of Cannabinoid receptor 2 (CNR2) from Homo sapiens (Human).